The following is a 356-amino-acid chain: DNA polymerase IV (356 aa).

In terms of domain architecture, UmuC spans M1–G188. Residues D11 and D106 each contribute to the Mg(2+) site. E107 is an active-site residue.

The protein belongs to the DNA polymerase type-Y family. As to quaternary structure, monomer. Mg(2+) serves as cofactor.

It localises to the cytoplasm. It catalyses the reaction DNA(n) + a 2'-deoxyribonucleoside 5'-triphosphate = DNA(n+1) + diphosphate. Functionally, poorly processive, error-prone DNA polymerase involved in untargeted mutagenesis. Copies undamaged DNA at stalled replication forks, which arise in vivo from mismatched or misaligned primer ends. These misaligned primers can be extended by PolIV. Exhibits no 3'-5' exonuclease (proofreading) activity. May be involved in translesional synthesis, in conjunction with the beta clamp from PolIII. This is DNA polymerase IV from Listeria monocytogenes serovar 1/2a (strain ATCC BAA-679 / EGD-e).